Consider the following 392-residue polypeptide: MKFIDEALIRIEAGDGGNGCVSFRREKFIPKGGPDGGDGGDGGDVYLIADENLNTLIDYRFEKSFAAERGENGRSSDCTGRRGKDITLRVPVGTRAIDNDTKEVLGDLTKHGTKMLVAKGGYHGLGNARFKSSVNRAPRQKTNGTPGEKRDLQLELMLLADVGMLGLPNAGKSTFIRAVSAAKPKVADYPFTTLVPSLGVTRVDTSRSFVIADIPGLIEGASEGAGLGVRFLKHLERCHVLIHLVDIAPIDESDPADNIAIIEGELFQYSEKLANKPRWLVFNKIDILSDEEATARAKNIMQRLGGEDDYYLISAATGKNVDVLCRDIMDFIEENPRQEQEKIDAQEVKFKWDDYHQEQLSEQVFTEDDQEEDDWDDWSEDDEEGVEIIYKP.

Residues methionine 1 to leucine 159 form the Obg domain. Residues alanine 160–glutamate 333 enclose the OBG-type G domain. GTP-binding positions include glycine 166–serine 173, phenylalanine 191–valine 195, aspartate 213–glycine 216, asparagine 283–aspartate 286, and serine 314–alanine 316. Residues serine 173 and threonine 193 each coordinate Mg(2+). The tract at residues serine 361–proline 392 is disordered. Over residues phenylalanine 365–valine 386 the composition is skewed to acidic residues.

It belongs to the TRAFAC class OBG-HflX-like GTPase superfamily. OBG GTPase family. Monomer. Requires Mg(2+) as cofactor.

The protein resides in the cytoplasm. Its function is as follows. An essential GTPase which binds GTP, GDP and possibly (p)ppGpp with moderate affinity, with high nucleotide exchange rates and a fairly low GTP hydrolysis rate. Plays a role in control of the cell cycle, stress response, ribosome biogenesis and in those bacteria that undergo differentiation, in morphogenesis control. The sequence is that of GTPase Obg from Histophilus somni (strain 2336) (Haemophilus somnus).